A 110-amino-acid chain; its full sequence is Phosphoribosyl-ATP pyrophosphatase (110 aa).

This sequence belongs to the PRA-PH family.

The protein localises to the cytoplasm. The catalysed reaction is 1-(5-phospho-beta-D-ribosyl)-ATP + H2O = 1-(5-phospho-beta-D-ribosyl)-5'-AMP + diphosphate + H(+). The protein operates within amino-acid biosynthesis; L-histidine biosynthesis; L-histidine from 5-phospho-alpha-D-ribose 1-diphosphate: step 2/9. The polypeptide is Phosphoribosyl-ATP pyrophosphatase (Lacticaseibacillus casei (strain BL23) (Lactobacillus casei)).